We begin with the raw amino-acid sequence, 286 residues long: Beta-lactamase SHV-13 (286 aa).

Positions methionine 1–alanine 21 are cleaved as a signal peptide. The active-site Acyl-ester intermediate is serine 66. Cysteine 73 and cysteine 119 are disulfide-bonded. Residue glutamate 164 is the Proton acceptor of the active site. Position 230–232 (lysine 230–glycine 232) interacts with substrate.

This sequence belongs to the class-A beta-lactamase family.

The enzyme catalyses a beta-lactam + H2O = a substituted beta-amino acid. Inhibited 16-fold better by the beta-lactamase inhibitor clavulanic acid than by tazobactam. Functionally, broad spectrum beta-lactamase which hydrolyzes penicillins, as well as cephalosporins except cephamycins. Also hydrolyzes aztreonam, but not imipenem. Confers highly resistance to ceftazidime, cefotaxime, aztreonam and piperacillin. The protein is Beta-lactamase SHV-13 (bla) of Klebsiella pneumoniae.